The sequence spans 632 residues: tRNA uridine 5-carboxymethylaminomethyl modification enzyme MnmG (632 aa).

FAD-binding positions include 15–20, I127, and S182; that span reads GAGHAG. 276-290 provides a ligand contact to NAD(+); it reads GPRYCPSIEDKIVRF. Q373 serves as a coordination point for FAD.

It belongs to the MnmG family. In terms of assembly, homodimer. Heterotetramer of two MnmE and two MnmG subunits. It depends on FAD as a cofactor.

It is found in the cytoplasm. Its function is as follows. NAD-binding protein involved in the addition of a carboxymethylaminomethyl (cmnm) group at the wobble position (U34) of certain tRNAs, forming tRNA-cmnm(5)s(2)U34. This is tRNA uridine 5-carboxymethylaminomethyl modification enzyme MnmG from Streptococcus pyogenes serotype M4 (strain MGAS10750).